Consider the following 201-residue polypeptide: Recombination protein RecR (201 aa).

The segment at 57–72 (CADCRTFTEQPVCTIC) adopts a C4-type zinc-finger fold. The region spanning 81 to 176 (GQICVVESPA…MASRIAHGVP (96 aa)) is the Toprim domain.

It belongs to the RecR family.

Its function is as follows. May play a role in DNA repair. It seems to be involved in an RecBC-independent recombinational process of DNA repair. It may act with RecF and RecO. This is Recombination protein RecR from Sodalis glossinidius (strain morsitans).